A 357-amino-acid chain; its full sequence is Fluoren-9-ol dehydrogenase (357 aa).

NADP(+) contacts are provided by residues 36–67 and Asp87; that span reads VTGG…TWDD. Catalysis depends on Tyr198, which acts as the Proton acceptor. Position 202 (Lys202) interacts with NADP(+).

This sequence belongs to the short-chain dehydrogenases/reductases (SDR) family.

It carries out the reaction 9H-fluoren-9-ol + NADP(+) = 9H-fluoren-9-one + NADPH + H(+). The catalysed reaction is 9H-fluoren-9-ol + NAD(+) = 9H-fluoren-9-one + NADH + H(+). The protein operates within aromatic compound metabolism. Its function is as follows. Catalyzes the dehydrogenation of both 9-fluorenol and 1,1a-dihydroxy-1-hydro-9-fluorenone to produce 9-fluorenone and 2'-carboxy-2,3- dihydroxybiphenyl, respectively. The sequence is that of Fluoren-9-ol dehydrogenase from Terrabacter sp. (strain DBF63).